The chain runs to 828 residues: DNA topoisomerase 3 (828 aa).

The 146-residue stretch at 4–149 (RILNVAEKPS…KFEFYRAHFS (146 aa)) folds into the Toprim domain. Positions 167–617 (NEKDSIAVDT…STIEKYKQLY (451 aa)) constitute a Topo IA-type catalytic domain. Residue Y361 is the O-(5'-phospho-DNA)-tyrosine intermediate of the active site. The interval 763–828 (QQQQQQQQQQ…SDRNNNNFIF (66 aa)) is disordered.

The protein belongs to the type IA topoisomerase family.

The catalysed reaction is ATP-independent breakage of single-stranded DNA, followed by passage and rejoining.. Functionally, releases the supercoiling and torsional tension of DNA introduced during the DNA replication and transcription by transiently cleaving and rejoining one strand of the DNA duplex. Introduces a single-strand break via transesterification at a target site in duplex DNA. The scissile phosphodiester is attacked by the catalytic tyrosine of the enzyme, resulting in the formation of a DNA-(5'-phosphotyrosyl)-enzyme intermediate and the expulsion of a 3'-OH DNA strand. The free DNA strand than undergoes passage around the unbroken strand thus removing DNA supercoils. Finally, in the religation step, the DNA 3'-OH attacks the covalent intermediate to expel the active-site tyrosine and restore the DNA phosphodiester backbone. This chain is DNA topoisomerase 3 (top3), found in Dictyostelium discoideum (Social amoeba).